We begin with the raw amino-acid sequence, 250 residues long: Lectin 1 (250 aa).

Asn119 is a glycosylation site (N-linked (GlcNAc...) asparagine; partial). Mn(2+) is bound by residues Glu128 and Asp130. Residues Asp130, Tyr132, Asn138, and Asp141 each contribute to the Ca(2+) site. Residues Asp141 and His146 each contribute to the Mn(2+) site.

Belongs to the leguminous lectin family.

Functionally, di-N-acetylchitobiose specific lectin. This is Lectin 1 from Laburnum alpinum (Scotch laburnum).